We begin with the raw amino-acid sequence, 168 residues long: Nicotinamide-nucleotide adenylyltransferase (168 aa).

This sequence belongs to the archaeal NMN adenylyltransferase family.

The protein localises to the cytoplasm. The enzyme catalyses beta-nicotinamide D-ribonucleotide + ATP + H(+) = diphosphate + NAD(+). It participates in cofactor biosynthesis; NAD(+) biosynthesis; NAD(+) from nicotinamide D-ribonucleotide: step 1/1. The protein is Nicotinamide-nucleotide adenylyltransferase of Methanosphaerula palustris (strain ATCC BAA-1556 / DSM 19958 / E1-9c).